The sequence spans 443 residues: UDP-glucuronic acid decarboxylase 4 (443 aa).

Position 2 is an N-acetylalanine (Ala2). The Cytoplasmic portion of the chain corresponds to 2 to 43 (ASELTNRRHEIEQPEAESYYPKPIKPWFVAIRPIRYMLREQR). Residues 44–64 (LVFVLVGIAIATLGFTIFSKS) form a helical; Signal-anchor for type II membrane protein membrane-spanning segment. The Lumenal segment spans residues 65-443 (SNHQPIPYDV…DSSTTSSSTE (379 aa)). An NAD(+)-binding site is contributed by 151–176 (DNFFTGRKENVMHHFNNPNFEMIRHD). Arg260 serves as a coordination point for substrate. Tyr263 acts as the Proton acceptor in catalysis. Position 263–267 (263–267 (YDEGK)) interacts with NAD(+). Asn292 contacts substrate. An NAD(+)-binding site is contributed by Arg304. Substrate contacts are provided by residues 305–309 (VVSNF), 322–329 (YGDGKQTR), and 389–393 (DPHKR).

The protein belongs to the NAD(P)-dependent epimerase/dehydratase family. UDP-glucuronic acid decarboxylase subfamily. The cofactor is NAD(+).

Its subcellular location is the golgi apparatus. The protein localises to the golgi stack membrane. It catalyses the reaction UDP-alpha-D-glucuronate + H(+) = UDP-alpha-D-xylose + CO2. The protein operates within nucleotide-sugar biosynthesis; UDP-alpha-D-xylose biosynthesis; UDP-alpha-D-xylose from UDP-alpha-D-glucuronate: step 1/1. Its function is as follows. Catalyzes the NAD-dependent decarboxylation of UDP-glucuronic acid to UDP-xylose. Necessary for the biosynthesis of the core tetrasaccharide in glycosaminoglycan biosynthesis. The sequence is that of UDP-glucuronic acid decarboxylase 4 (UXS4) from Arabidopsis thaliana (Mouse-ear cress).